The following is a 220-amino-acid chain: Translation initiation factor IF-3 (220 aa).

The interval 182-220 (TPLVKKDDKEEPATRAVRTITAPPRPTSARLASKPAGNG) is disordered. A compositionally biased stretch (basic and acidic residues) spans 185-194 (VKKDDKEEPA).

This sequence belongs to the IF-3 family. Monomer.

The protein resides in the cytoplasm. IF-3 binds to the 30S ribosomal subunit and shifts the equilibrium between 70S ribosomes and their 50S and 30S subunits in favor of the free subunits, thus enhancing the availability of 30S subunits on which protein synthesis initiation begins. The protein is Translation initiation factor IF-3 of Synechococcus sp. (strain WH7803).